Consider the following 361-residue polypeptide: Histidinol-phosphate aminotransferase (361 aa).

At lysine 223 the chain carries N6-(pyridoxal phosphate)lysine.

Belongs to the class-II pyridoxal-phosphate-dependent aminotransferase family. Histidinol-phosphate aminotransferase subfamily. Homodimer. Pyridoxal 5'-phosphate serves as cofactor.

It catalyses the reaction L-histidinol phosphate + 2-oxoglutarate = 3-(imidazol-4-yl)-2-oxopropyl phosphate + L-glutamate. Its pathway is amino-acid biosynthesis; L-histidine biosynthesis; L-histidine from 5-phospho-alpha-D-ribose 1-diphosphate: step 7/9. The chain is Histidinol-phosphate aminotransferase from Deinococcus radiodurans (strain ATCC 13939 / DSM 20539 / JCM 16871 / CCUG 27074 / LMG 4051 / NBRC 15346 / NCIMB 9279 / VKM B-1422 / R1).